Reading from the N-terminus, the 104-residue chain is Nucleoid-associated protein PEPE_1483 (104 aa).

Residues 1 to 35 (MRGGMGNMQSMMRQMQKMQKKVTEEQEKLNQTEFT) are disordered. The segment covering 8–17 (MQSMMRQMQK) has biased composition (low complexity). Positions 21–30 (KVTEEQEKLN) are enriched in basic and acidic residues.

This sequence belongs to the YbaB/EbfC family. As to quaternary structure, homodimer.

The protein localises to the cytoplasm. Its subcellular location is the nucleoid. Its function is as follows. Binds to DNA and alters its conformation. May be involved in regulation of gene expression, nucleoid organization and DNA protection. The protein is Nucleoid-associated protein PEPE_1483 of Pediococcus pentosaceus (strain ATCC 25745 / CCUG 21536 / LMG 10740 / 183-1w).